Here is a 351-residue protein sequence, read N- to C-terminus: Rhodopsin (351 aa).

Residues 1–36 (MNGTEGPFFYIPMVNTTGIVRSPYEYPQYYLVNPAA) are Extracellular-facing. N-linked (GlcNAc...) asparagine glycosylation is found at asparagine 2 and asparagine 15. The helical transmembrane segment at 37–61 (YAILGAYMFFLIIVGFPVNFMTLYV) threads the bilayer. Residues 62-73 (TLEHKKLRTPLN) are Cytoplasmic-facing. Residues 74 to 96 (YILLNLAVADLFMVIGGFTTTMY) traverse the membrane as a helical segment. The Extracellular segment spans residues 97 to 110 (TSMHGYFVLGRLGC). A disulfide bond links cysteine 110 and cysteine 187. Residues 111-133 (NLEGFFATLGGMISLWSLAVLAI) form a helical membrane-spanning segment. The 'Ionic lock' involved in activated form stabilization motif lies at 134–136 (ERW). Over 134-152 (ERWVVVCKPISNFRFGENH) the chain is Cytoplasmic. The helical transmembrane segment at 153–173 (AIMGVSLTWGMALACTVPPLV) threads the bilayer. At 174–202 (GWSRYIPEGMQCSCGIDYYTRAEGFNNES) the chain is on the extracellular side. N-linked (GlcNAc...) asparagine glycosylation is present at asparagine 200. The helical transmembrane segment at 203 to 224 (FVLYMFFCHFTIPLTIIFFCYG) threads the bilayer. The Cytoplasmic segment spans residues 225–252 (RLLCAVKEAAAAQQESETTQRAEREVTR). Residues 253–274 (MVIIMVIGFLVCWLPYASVAWF) traverse the membrane as a helical segment. The Extracellular portion of the chain corresponds to 275-286 (IFTHQGSEFGPL). A helical membrane pass occupies residues 287-308 (FMTIPAFFAKSSSIYNPMIYIC). Lysine 296 carries the post-translational modification N6-(retinylidene)lysine. Over 309-351 (MNKQFRHCMITTLFCGKNPFEGEEEGASSTKTEASSASSVSPA) the chain is Cytoplasmic. The S-palmitoyl cysteine moiety is linked to residue cysteine 323. Residues 330–351 (GEEEGASSTKTEASSASSVSPA) form a disordered region. The span at 335–351 (ASSTKTEASSASSVSPA) shows a compositional bias: low complexity.

The protein belongs to the G-protein coupled receptor 1 family. Opsin subfamily. In terms of processing, phosphorylated on some or all of the serine and threonine residues present in the C-terminal region. Post-translationally, contains one covalently linked retinal chromophore.

It localises to the membrane. The protein resides in the cell projection. It is found in the cilium. The protein localises to the photoreceptor outer segment. Its function is as follows. Photoreceptor required for image-forming vision at low light intensity. While most salt water fish species use retinal as chromophore, most freshwater fish use 3-dehydroretinal, or a mixture of retinal and 3-dehydroretinal. Light-induced isomerization of 11-cis to all-trans retinal triggers a conformational change that activates signaling via G-proteins. Subsequent receptor phosphorylation mediates displacement of the bound G-protein alpha subunit by arrestin and terminates signaling. The polypeptide is Rhodopsin (rho) (Sargocentron diadema (Crown squirrelfish)).